The primary structure comprises 305 residues: Protoheme IX farnesyltransferase (305 aa).

9 helical membrane-spanning segments follow: residues 29 to 49 (LIVFCAAIGMLLAVPGAPGLA), 55 to 75 (LWATLGIWLVASAAAAFNCLI), 101 to 121 (ALIFSAVLCSAGMAVLHEAVN), 123 to 143 (LTAWLTLGTFVGYAVIYTVVL), 151 to 171 (IVIGGISGAMPPLLGWAAMTG), 177 to 197 (GLILCLIIFLWTPPHFWALAL), 219 to 241 (FTRLQILLYTFVLLAGTLLPFVQ), 246 to 268 (WLYLAAAFVLGLRFIHYAWRLWR), and 283 to 303 (IWHLSLLFAALLVDHYTQDLL).

This sequence belongs to the UbiA prenyltransferase family. Protoheme IX farnesyltransferase subfamily.

It is found in the cell inner membrane. It carries out the reaction heme b + (2E,6E)-farnesyl diphosphate + H2O = Fe(II)-heme o + diphosphate. It functions in the pathway porphyrin-containing compound metabolism; heme O biosynthesis; heme O from protoheme: step 1/1. Its function is as follows. Converts heme B (protoheme IX) to heme O by substitution of the vinyl group on carbon 2 of heme B porphyrin ring with a hydroxyethyl farnesyl side group. The sequence is that of Protoheme IX farnesyltransferase from Leptothrix cholodnii (strain ATCC 51168 / LMG 8142 / SP-6) (Leptothrix discophora (strain SP-6)).